We begin with the raw amino-acid sequence, 417 residues long: Serine hydroxymethyltransferase (417 aa).

(6S)-5,6,7,8-tetrahydrofolate is bound by residues Leu121 and 125–127 (GHL). N6-(pyridoxal phosphate)lysine is present on Lys229. Residue 354-356 (SPF) coordinates (6S)-5,6,7,8-tetrahydrofolate.

This sequence belongs to the SHMT family. In terms of assembly, homodimer. It depends on pyridoxal 5'-phosphate as a cofactor.

The protein resides in the cytoplasm. The enzyme catalyses (6R)-5,10-methylene-5,6,7,8-tetrahydrofolate + glycine + H2O = (6S)-5,6,7,8-tetrahydrofolate + L-serine. It participates in one-carbon metabolism; tetrahydrofolate interconversion. The protein operates within amino-acid biosynthesis; glycine biosynthesis; glycine from L-serine: step 1/1. In terms of biological role, catalyzes the reversible interconversion of serine and glycine with tetrahydrofolate (THF) serving as the one-carbon carrier. This reaction serves as the major source of one-carbon groups required for the biosynthesis of purines, thymidylate, methionine, and other important biomolecules. Also exhibits THF-independent aldolase activity toward beta-hydroxyamino acids, producing glycine and aldehydes, via a retro-aldol mechanism. The protein is Serine hydroxymethyltransferase of Azotobacter vinelandii (strain DJ / ATCC BAA-1303).